The chain runs to 94 residues: Small ribosomal subunit protein bS20 (94 aa).

Belongs to the bacterial ribosomal protein bS20 family.

In terms of biological role, binds directly to 16S ribosomal RNA. This is Small ribosomal subunit protein bS20 from Aquifex aeolicus (strain VF5).